A 303-amino-acid chain; its full sequence is D-alanine--D-alanine ligase (303 aa).

An ATP-grasp domain is found at 103–293 (KTLFIKGGIP…FAQLCEKILE (191 aa)). Residue 130–179 (PYVIKPSRQGSSIGIEFVYDIKELDQAIKKSTQYDHVVLAEALITGKELT) participates in ATP binding. Positions 247, 260, and 262 each coordinate Mg(2+).

This sequence belongs to the D-alanine--D-alanine ligase family. Requires Mg(2+) as cofactor. Mn(2+) is required as a cofactor.

It is found in the cytoplasm. It catalyses the reaction 2 D-alanine + ATP = D-alanyl-D-alanine + ADP + phosphate + H(+). The protein operates within cell wall biogenesis; peptidoglycan biosynthesis. Its function is as follows. Cell wall formation. The chain is D-alanine--D-alanine ligase from Methylacidiphilum infernorum (isolate V4) (Methylokorus infernorum (strain V4)).